Reading from the N-terminus, the 723-residue chain is Transmembrane channel-like protein 7 (723 aa).

The disordered stretch occupies residues 1-21 (MSESSASALQLGRPSRQPAVH). The Extracellular portion of the chain corresponds to 1–168 (MSESSASALQ…GIQSYFSFLR (168 aa)). The N-linked (GlcNAc...) asparagine glycan is linked to asparagine 24. The segment at 51 to 70 (RRRTTVHSRDKQSGTLLKST) is disordered. Asparagine 84 carries an N-linked (GlcNAc...) asparagine glycan. Serine 89 is modified (phosphoserine). N-linked (GlcNAc...) asparagine glycosylation is present at asparagine 96. A helical transmembrane segment spans residues 169 to 189 (FLVLLNLVIFLIIFMLVLLPI). Topologically, residues 190 to 219 (LLTKYKITNSSFVLIPFKDTDIQCTVYPVS) are cytoplasmic. A helical transmembrane segment spans residues 220-240 (SSGLIYFYSYIIDLLSGTGFL). At 241-263 (EETSLFYGHYTIDGVKFQNFTYD) the chain is on the extracellular side. N-linked (GlcNAc...) asparagine glycosylation occurs at asparagine 259. Residues 264–284 (LPLAYLISTIAYLALSLLWIV) form a helical membrane-spanning segment. Over 285-362 (KRSVEGFKIN…EETIRIYSLR (78 aa)) the chain is Cytoplasmic. The helical transmembrane segment at 363–383 (LFLNCIVLAVLGACFYAIYVA) threads the bilayer. At 384–404 (TVFSQEHMKKEIDKMVFGENL) the chain is on the extracellular side. A helical membrane pass occupies residues 405–425 (LILYLPSIVITLANFITPMIF). The Cytoplasmic portion of the chain corresponds to 426-494 (AKIIRYEDYS…PCWETQVGQE (69 aa)). The helical transmembrane segment at 495–515 (MYKLMIFDFIIILAVTLFVDF) threads the bilayer. Over 516–555 (PRKLLVTYCSSWKLIQCWGQQEFAIPDNVLGIVYGQTICW) the chain is Extracellular. Residues 556-576 (IGAFFSPLLPAIATLKFIIIF) traverse the membrane as a helical segment. At 577–601 (YVKEWSLLYTCRPSPRPFRASNSNF) the chain is on the cytoplasmic side. Residues 602–622 (FFLLVLLIGLCLAIIPLTISI) traverse the membrane as a helical segment. At 623–665 (SRIPSSKACGPFTNFNTTWEVIPKTVSTFPSSLQSFIHGVTSE) the chain is on the extracellular side. A glycan (N-linked (GlcNAc...) asparagine) is linked at asparagine 638. A helical membrane pass occupies residues 666-686 (AFAVPFFMIICLIMFYFIALA). Residues 687-723 (GAHKRVVIQLREQLSLESRDKRYLIQKLTEAQRDTRN) are Cytoplasmic-facing.

The protein belongs to the TMC family. Interacts with PIEZO2; the interaction inhibits PIEZO2-conducted mechanically activated currents.

The protein resides in the membrane. Functionally, acts as an inhibitory modulator of PIEZO2 mechanosensitive channel in dorsal root ganglion (DRG) neurons through physical interactions or interference with the interaction between Piezo2 and the cytoskeleton. This chain is Transmembrane channel-like protein 7 (TMC7), found in Macaca fascicularis (Crab-eating macaque).